A 360-amino-acid polypeptide reads, in one-letter code: Photosystem II protein D1 (360 aa).

3 helical membrane passes run 29-46 (YIGWFGVLMIPTLVSAIA), 118-133 (HFLIGVACYLGREWEL), and 142-156 (WICVAFSAPVAAATA). A chlorophyll a-binding site is contributed by H118. Position 126 (Y126) interacts with pheophytin a. 2 residues coordinate [CaMn4O5] cluster: D170 and E189. Residues 197-218 (FHMLGVAGVFGGSLFSAMHGSL) traverse the membrane as a helical segment. H198 is a chlorophyll a binding site. Residues H215 and 264–265 (SF) each bind a quinone. H215 contributes to the Fe cation binding site. H272 contributes to the Fe cation binding site. The helical transmembrane segment at 274–288 (FLAAWPVIGIWFTAL) threads the bilayer. Positions 332, 333, 342, and 344 each coordinate [CaMn4O5] cluster. Residues 345-360 (AGDVAPVALTAPPING) constitute a propeptide that is removed on maturation.

This sequence belongs to the reaction center PufL/M/PsbA/D family. PSII is composed of 1 copy each of membrane proteins PsbA, PsbB, PsbC, PsbD, PsbE, PsbF, PsbH, PsbI, PsbJ, PsbK, PsbL, PsbM, PsbT, PsbX, PsbY, PsbZ, Psb30/Ycf12, peripheral proteins PsbO, CyanoQ (PsbQ), PsbU, PsbV and a large number of cofactors. It forms dimeric complexes. Requires The D1/D2 heterodimer binds P680, chlorophylls that are the primary electron donor of PSII, and subsequent electron acceptors. It shares a non-heme iron and each subunit binds pheophytin, quinone, additional chlorophylls, carotenoids and lipids. D1 provides most of the ligands for the Mn4-Ca-O5 cluster of the oxygen-evolving complex (OEC). There is also a Cl(-1) ion associated with D1 and D2, which is required for oxygen evolution. The PSII complex binds additional chlorophylls, carotenoids and specific lipids. as cofactor. Post-translationally, tyr-161 forms a radical intermediate that is referred to as redox-active TyrZ, YZ or Y-Z. C-terminally processed by CtpA; processing is essential to allow assembly of the oxygen-evolving complex and thus photosynthetic growth.

It is found in the cellular thylakoid membrane. It carries out the reaction 2 a plastoquinone + 4 hnu + 2 H2O = 2 a plastoquinol + O2. Photosystem II (PSII) is a light-driven water:plastoquinone oxidoreductase that uses light energy to abstract electrons from H(2)O, generating O(2) and a proton gradient subsequently used for ATP formation. It consists of a core antenna complex that captures photons, and an electron transfer chain that converts photonic excitation into a charge separation. The D1/D2 (PsbA/PsbD) reaction center heterodimer binds P680, the primary electron donor of PSII as well as several subsequent electron acceptors. The polypeptide is Photosystem II protein D1 (Trichormus azollae (Anabaena azollae)).